A 349-amino-acid chain; its full sequence is 4-hydroxythreonine-4-phosphate dehydrogenase (349 aa).

Residues histidine 141 and threonine 142 each contribute to the substrate site. Residues histidine 176, histidine 221, and histidine 276 each coordinate a divalent metal cation. Substrate-binding residues include lysine 284, asparagine 293, and arginine 302.

The protein belongs to the PdxA family. As to quaternary structure, homodimer. Zn(2+) is required as a cofactor. Mg(2+) serves as cofactor. Requires Co(2+) as cofactor.

Its subcellular location is the cytoplasm. It catalyses the reaction 4-(phosphooxy)-L-threonine + NAD(+) = 3-amino-2-oxopropyl phosphate + CO2 + NADH. It participates in cofactor biosynthesis; pyridoxine 5'-phosphate biosynthesis; pyridoxine 5'-phosphate from D-erythrose 4-phosphate: step 4/5. Functionally, catalyzes the NAD(P)-dependent oxidation of 4-(phosphooxy)-L-threonine (HTP) into 2-amino-3-oxo-4-(phosphooxy)butyric acid which spontaneously decarboxylates to form 3-amino-2-oxopropyl phosphate (AHAP). The polypeptide is 4-hydroxythreonine-4-phosphate dehydrogenase (Methylorubrum extorquens (strain PA1) (Methylobacterium extorquens)).